Here is a 294-residue protein sequence, read N- to C-terminus: N-acetylmuramic acid 6-phosphate etherase (294 aa).

The region spanning 54–217 (VIQSFEEEGR…STASMIGVGK (164 aa)) is the SIS domain. Residue Glu-82 is the Proton donor of the active site. Glu-113 is an active-site residue.

This sequence belongs to the GCKR-like family. MurNAc-6-P etherase subfamily. Homodimer.

It carries out the reaction N-acetyl-D-muramate 6-phosphate + H2O = N-acetyl-D-glucosamine 6-phosphate + (R)-lactate. It functions in the pathway amino-sugar metabolism; N-acetylmuramate degradation. Specifically catalyzes the cleavage of the D-lactyl ether substituent of MurNAc 6-phosphate, producing GlcNAc 6-phosphate and D-lactate. The polypeptide is N-acetylmuramic acid 6-phosphate etherase (Bacillus cereus (strain ZK / E33L)).